A 220-amino-acid chain; its full sequence is Cytidylate kinase (220 aa).

9-17 (GPAASGKST) provides a ligand contact to ATP.

The protein belongs to the cytidylate kinase family. Type 1 subfamily.

It localises to the cytoplasm. It catalyses the reaction CMP + ATP = CDP + ADP. It carries out the reaction dCMP + ATP = dCDP + ADP. The polypeptide is Cytidylate kinase (Thermotoga petrophila (strain ATCC BAA-488 / DSM 13995 / JCM 10881 / RKU-1)).